Here is a 214-residue protein sequence, read N- to C-terminus: Charged multivesicular body protein 2b-A (214 aa).

Positions 25 to 55 (QRAITRDRTALEKQEKQLEMEIKKMAKAGNK) form a coiled coil. The interval 178-214 (MAKAPSAAKGLPSASASKSTGISDEEIERQLKALGVD) is disordered. The short motif at 202–212 (EEIERQLKALG) is the MIT-interacting motif element.

The protein belongs to the SNF7 family. As to quaternary structure, probable core component of the endosomal sorting required for transport complex III (ESCRT-III). ESCRT-III components are thought to multimerize to form a flat lattice on the perimeter membrane of the endosome.

It localises to the cytoplasm. The protein localises to the cytosol. The protein resides in the late endosome membrane. Functionally, probable core component of the endosomal sorting required for transport complex III (ESCRT-III) which is involved in multivesicular bodies (MVBs) formation and sorting of endosomal cargo proteins into MVBs. MVBs contain intraluminal vesicles (ILVs) that are generated by invagination and scission from the limiting membrane of the endosome and mostly are delivered to lysosomes enabling degradation of membrane proteins, such as stimulated growth factor receptors, lysosomal enzymes and lipids. This is Charged multivesicular body protein 2b-A (chmp2b-a) from Xenopus laevis (African clawed frog).